A 133-amino-acid polypeptide reads, in one-letter code: Large ribosomal subunit protein bL17 (133 aa).

The protein belongs to the bacterial ribosomal protein bL17 family. Part of the 50S ribosomal subunit. Contacts protein L32.

The sequence is that of Large ribosomal subunit protein bL17 from Ehrlichia chaffeensis (strain ATCC CRL-10679 / Arkansas).